The primary structure comprises 493 residues: Na(+)/H(+) antiporter subunit D (493 aa).

15 helical membrane passes run N3–T23, I31–V51, F77–F97, S107–G127, L129–L149, I163–V183, G203–F223, F227–L247, V251–T271, L274–S294, I299–T319, L330–L350, G370–V390, I407–I427, and L449–V469.

The protein belongs to the CPA3 antiporters (TC 2.A.63) subunit D family. In terms of assembly, forms a heterooligomeric complex that consists of seven subunits: MrpA, MrpB, MrpC, MrpD, MrpE, MrpF and MrpG.

The protein localises to the cell membrane. Functionally, mrp complex is a Na(+)/H(+) antiporter that is considered to be the major Na(+) excretion system in B.subtilis. Has a major role in Na(+) resistance and a minor role in Na(+)- and K(+)-dependent pH homeostasis as compared to TetB. MrpA may be the actual Na(+)/H(+) antiporter, although the six other Mrp proteins are all required for Na(+)/H(+) antiport activity and Na(+) resistance. MrpA is required for initiation of sporulation when external Na(+) concentration increases. Also transports Li(+) but not K(+), Ca(2+) or Mg(2+). The polypeptide is Na(+)/H(+) antiporter subunit D (mrpD) (Bacillus subtilis (strain 168)).